The sequence spans 134 residues: Replication enhancer protein (134 aa).

Belongs to the geminiviridae replication enhancer protein family. Homooligomer. Interacts with the replication-associated protein (REP). Interacts with host proliferating cell nuclear antigen (PCNA). Interacts with host retinoblastoma-related protein 1 (RBR1), and may thereby deregulate the host cell cycle. Oligomerization and interaction with PCNA are necessary for optimal replication enhancement.

Increases viral DNA accumulation. Enhances infectivity and symptom expression. The sequence is that of Replication enhancer protein from Nicotiana tabacum (Common tobacco).